We begin with the raw amino-acid sequence, 308 residues long: Extended-spectrum beta-lactamase PER-1 (308 aa).

An N-terminal signal peptide occupies residues 1-26 (MNVIIKAVVTASTLLMVSFSSFETSA). Ser71 functions as the Nucleophile; acyl-ester intermediate in the catalytic mechanism. Residues Lys74, Ser135, and Glu171 each coordinate a beta-lactam.

The protein belongs to the class-A beta-lactamase family. In terms of assembly, monomer.

It is found in the secreted. It carries out the reaction a beta-lactam + H2O = a substituted beta-amino acid. Its activity is regulated as follows. Inhibited by the beta-lactamase-blocking agents clavulanic acid, tazobactam and sulbactam. Not inhibited by EDTA. Extended-spectrum beta-lactamase (ESBL) which confers resistance to penicillins, as well as first-, second- and third-generation cephalosporins, but not the carbapenem, imipenem, in the JM109 strain of E.coli. Has cefotaxime-hydrolyzing activity. This Pseudomonas aeruginosa protein is Extended-spectrum beta-lactamase PER-1.